Reading from the N-terminus, the 462-residue chain is MLHIHNSLTQRKERFEPIQPGHVRMYVCGMTVYDYCHLGHARALVVFDMVARYLRHLGYRVTFVRNITDIDDKIIRRAAELGEPMGAVTERFIRAMHEDAEALGVLPPDHEPRATGHIDDIIAMIERLVERGHAYVADDGDVYFAVSSYPEYGKLSGERQEDLRAGARVEVDEGKRDPVDFALWKAARPGEPAWPSPWGEGRPGWHIECSAMSTQVLGDHFDIHGGGLDLKFPHHENEIAQSECATGHPFVNYWMHNGHVRINDEKMAKSLGNFFTVREVLSEHRAEAVRLFLLSSHYRSPLNYSLDGLRQAQGALERLYLALRGLPEAPVPEADPQGFRARFHAAMDDDFNTPEALAVLFELAREVNRLRQGDDDAGAAAPGALLRVLGGVLGLLQDDPERFLRGGDAGGDEDAEIDALVARRTEARKNRDFAEADRIRDELAERGIILEDGPQGTTWRRE.

Residue cysteine 28 participates in Zn(2+) binding. A 'HIGH' region motif is present at residues 30–40 (MTVYDYCHLGH). Cysteine 209, histidine 234, and glutamate 238 together coordinate Zn(2+). The 'KMSKS' region signature appears at 266–270 (KMAKS). Lysine 269 is an ATP binding site.

The protein belongs to the class-I aminoacyl-tRNA synthetase family. Monomer. Requires Zn(2+) as cofactor.

The protein localises to the cytoplasm. The enzyme catalyses tRNA(Cys) + L-cysteine + ATP = L-cysteinyl-tRNA(Cys) + AMP + diphosphate. This chain is Cysteine--tRNA ligase, found in Alkalilimnicola ehrlichii (strain ATCC BAA-1101 / DSM 17681 / MLHE-1).